The chain runs to 169 residues: MAWFTTVLIVASLLGSLVAQPITYTLVPTSSIPSQPTTSNERNKSCRLAIEELGALVQLLKELSSDESSGARLSEDVIVKLVNALIYVATYTCKGTGYNTTPLDILCDGVCGVGAGRGAEMEGKPRSGAGKGAEMEGKPKSTESVAETNTVAAGTGVVAEKTGTESSAS.

Positions 1–19 (MAWFTTVLIVASLLGSLVA) are cleaved as a signal peptide. Tetradecapeptide repeat units lie at residues 114-127 (GAGRGAEMEGKPRS) and 128-141 (GAGKGAEMEGKPKS). The interval 119 to 169 (AEMEGKPRSGAGKGAEMEGKPKSTESVAETNTVAAGTGVVAEKTGTESSAS) is disordered. Over residues 142-152 (TESVAETNTVA) the composition is skewed to polar residues.

This protein is one of two components of the prominent 'filler' that helps mold the shape of aeropyle crowns. This chain is Chorion protein E1, found in Antheraea polyphemus (Polyphemus moth).